A 299-amino-acid polypeptide reads, in one-letter code: N-acetylaspartate synthetase (299 aa).

The span at 44 to 57 shows a compositional bias: pro residues; it reads AAPGPAAAPPPAAG. The interval 44-70 is disordered; sequence AAPGPAAAPPPAAGPQPHGGTGGAGPP. Over residues 60-70 the composition is skewed to gly residues; the sequence is PHGGTGGAGPP. A helical membrane pass occupies residues 118–138; sequence YALLAALCFAVTRSLLLTCLV. One can recognise an N-acetyltransferase domain in the interval 143-280; sequence LALRYYYSRK…VLPGMTLSLA (138 aa).

This sequence belongs to the NAT8 family. Expressed in brain, including in mesencephalic dopaminergic neurons of the substantia nigra and ventral tegmental area and oligodendrocytes. Expressed in cortical pyramidal neurons and granule cells of the hippocampus (at protein level).

Its subcellular location is the cytoplasm. The protein localises to the microsome membrane. It is found in the mitochondrion membrane. It localises to the endoplasmic reticulum membrane. It catalyses the reaction L-aspartate + acetyl-CoA = N-acetyl-L-aspartate + CoA + H(+). With respect to regulation, aminooxyacetic acid (AOAA) blocks its activity in both cytoplasm and mitochondria. Its function is as follows. Catalyzes the synthesis of N-acetylaspartate acid (NAA) from L-aspartate and acetyl-CoA. Promotes dopamine uptake by regulating TNF-alpha expression. Attenuates methamphetamine-induced inhibition of dopamine uptake. This is N-acetylaspartate synthetase (Nat8l) from Rattus norvegicus (Rat).